Here is a 215-residue protein sequence, read N- to C-terminus: Histidine biosynthesis bifunctional protein HisIE (215 aa).

A phosphoribosyl-AMP cyclohydrolase region spans residues 1–114; the sequence is MLKKHDLLNL…FISNKYNINF (114 aa). The interval 115–215 is phosphoribosyl-ATP pyrophosphohydrolase; sequence LFKLEEIIEE…LNTNSEKLLK (101 aa).

The protein in the N-terminal section; belongs to the PRA-CH family. It in the C-terminal section; belongs to the PRA-PH family.

The protein resides in the cytoplasm. It catalyses the reaction 1-(5-phospho-beta-D-ribosyl)-ATP + H2O = 1-(5-phospho-beta-D-ribosyl)-5'-AMP + diphosphate + H(+). The enzyme catalyses 1-(5-phospho-beta-D-ribosyl)-5'-AMP + H2O = 1-(5-phospho-beta-D-ribosyl)-5-[(5-phospho-beta-D-ribosylamino)methylideneamino]imidazole-4-carboxamide. It functions in the pathway amino-acid biosynthesis; L-histidine biosynthesis; L-histidine from 5-phospho-alpha-D-ribose 1-diphosphate: step 2/9. It participates in amino-acid biosynthesis; L-histidine biosynthesis; L-histidine from 5-phospho-alpha-D-ribose 1-diphosphate: step 3/9. The polypeptide is Histidine biosynthesis bifunctional protein HisIE (hisI) (Buchnera aphidicola subsp. Acyrthosiphon pisum (strain APS) (Acyrthosiphon pisum symbiotic bacterium)).